Here is a 469-residue protein sequence, read N- to C-terminus: Light-independent protochlorophyllide reductase subunit N (469 aa).

The [4Fe-4S] cluster site is built by Cys24, Cys49, and Cys109.

The protein belongs to the BchN/ChlN family. Protochlorophyllide reductase is composed of three subunits; ChlL, ChlN and ChlB. Forms a heterotetramer of two ChlB and two ChlN subunits. Requires [4Fe-4S] cluster as cofactor.

The enzyme catalyses chlorophyllide a + oxidized 2[4Fe-4S]-[ferredoxin] + 2 ADP + 2 phosphate = protochlorophyllide a + reduced 2[4Fe-4S]-[ferredoxin] + 2 ATP + 2 H2O. It functions in the pathway porphyrin-containing compound metabolism; chlorophyll biosynthesis (light-independent). Its function is as follows. Component of the dark-operative protochlorophyllide reductase (DPOR) that uses Mg-ATP and reduced ferredoxin to reduce ring D of protochlorophyllide (Pchlide) to form chlorophyllide a (Chlide). This reaction is light-independent. The NB-protein (ChlN-ChlB) is the catalytic component of the complex. This chain is Light-independent protochlorophyllide reductase subunit N, found in Gloeobacter violaceus (strain ATCC 29082 / PCC 7421).